A 212-amino-acid polypeptide reads, in one-letter code: MPTREIRHPLIRHKIGLMRRADISTKNFRELAQEVGALLTYEATNDLPLESYEIEGWAGAVQVEKIAGKKITVVPILRAGIGMLDGVLSLIPGAKVSAVGVARNEETLEAHTYLEKLAPEIDSRLALIIDPMLATGGSMVATIDLLKKAGCKDIRAMVLVAAPEGIKAVEQAHPDVTIFTASIDQRLNEHGYIIPGLGDAGDKIFGTKQKDA.

Residues Arg78, Arg103, and 130–138 contribute to the 5-phospho-alpha-D-ribose 1-diphosphate site; that span reads DPMLATGGS. Uracil is bound by residues Ile193 and 198–200; that span reads GDA. Asp199 lines the 5-phospho-alpha-D-ribose 1-diphosphate pocket.

The protein belongs to the UPRTase family. The cofactor is Mg(2+).

The catalysed reaction is UMP + diphosphate = 5-phospho-alpha-D-ribose 1-diphosphate + uracil. It participates in pyrimidine metabolism; UMP biosynthesis via salvage pathway; UMP from uracil: step 1/1. Allosterically activated by GTP. Functionally, catalyzes the conversion of uracil and 5-phospho-alpha-D-ribose 1-diphosphate (PRPP) to UMP and diphosphate. The sequence is that of Uracil phosphoribosyltransferase from Ectopseudomonas mendocina (strain ymp) (Pseudomonas mendocina).